Here is a 603-residue protein sequence, read N- to C-terminus: Polypeptide N-acetylgalactosaminyltransferase 9 (603 aa).

The Cytoplasmic portion of the chain corresponds to Met1 to Lys6. The chain crosses the membrane as a helical; Signal-anchor for type II membrane protein span at residues Ile7–Arg29. Topologically, residues Leu30–His603 are lumenal. Cystine bridges form between Cys141–Cys372 and Cys363–Cys442. The segment at Leu150–Arg261 is catalytic subdomain A. Positions 191 and 222 each coordinate substrate. Mn(2+) is bound by residues Asp245, His247, and His377. A catalytic subdomain B region spans residues Pro318–Arg380. The substrate site is built by Arg380 and Tyr385. Residue Asn460 is glycosylated (N-linked (GlcNAc...) asparagine). In terms of domain architecture, Ricin B-type lectin spans Thr464–His600. 3 disulfide bridges follow: Cys477–Cys493, Cys525–Cys540, and Cys567–Cys587.

It belongs to the glycosyltransferase 2 family. GalNAc-T subfamily. The cofactor is Mn(2+). As to expression, specifically expressed in brain. Not expressed in heart, placenta, lung, liver, skeletal muscle, kidney, pancreas, spleen, thymus, prostate, testis, ovary, small intestine, colon and leukocyte. In brain, it is expressed in cerebellum, frontal lobe, temporal lobe, putamen and spinal cord, weakly expressed in cerebral cortex. Not expressed in medulla and occipital pole.

It localises to the golgi apparatus membrane. It catalyses the reaction L-seryl-[protein] + UDP-N-acetyl-alpha-D-galactosamine = a 3-O-[N-acetyl-alpha-D-galactosaminyl]-L-seryl-[protein] + UDP + H(+). It carries out the reaction L-threonyl-[protein] + UDP-N-acetyl-alpha-D-galactosamine = a 3-O-[N-acetyl-alpha-D-galactosaminyl]-L-threonyl-[protein] + UDP + H(+). It functions in the pathway protein modification; protein glycosylation. In terms of biological role, catalyzes the initial reaction in O-linked oligosaccharide biosynthesis, the transfer of an N-acetyl-D-galactosamine residue to a serine or threonine residue on the protein receptor. Does not glycosylate apomucin or SDC3. The protein is Polypeptide N-acetylgalactosaminyltransferase 9 (GALNT9) of Homo sapiens (Human).